The chain runs to 200 residues: ATP synthase subunit s, mitochondrial (200 aa).

The transit peptide at 1–25 (MMPFGKISQQLCGVKKLPWSCDSRY) directs the protein to the mitochondrion. Residues 1–61 (MMPFGKISQQ…SEWLLRCGAM (61 aa)) form an N-terminal domain region. Mg(2+) is bound at residue glycine 59. LRR repeat units lie at residues 62-87 (VRYHGQERWQKDYNHLPTGPLDKYKI), 88-116 (QAIDATDSCIMSIGFDHMEGLEHVEKIRL), 117-141 (CKCHYIEDDCLLRLSQLENLQKTIL), and 142-173 (EMEIISCGNITDKGIIALRHLRNLKYLLLSDL). Threonine 93 provides a ligand contact to Mg(2+).

This sequence belongs to the ATP synthase subunit s family. As to quaternary structure, homotetramer. Associates with ATP synthase.

Its subcellular location is the mitochondrion. It is found in the mitochondrion inner membrane. Its function is as follows. Involved in regulation of mitochondrial membrane ATP synthase. Necessary for H(+) conduction of ATP synthase. Facilitates energy-driven catalysis of ATP synthesis by blocking a proton leak through an alternative proton exit pathway. In Homo sapiens (Human), this protein is ATP synthase subunit s, mitochondrial.